Consider the following 211-residue polypeptide: NADH-quinone oxidoreductase subunit I (211 aa).

4Fe-4S ferredoxin-type domains follow at residues 90-119 (RLWE…IDTK) and 129-158 (TEYS…HGGE). Residues Cys99, Cys102, Cys105, Cys109, Cys138, Cys141, Cys144, and Cys148 each contribute to the [4Fe-4S] cluster site.

The protein belongs to the complex I 23 kDa subunit family. NDH-1 is composed of 14 different subunits. Subunits NuoA, H, J, K, L, M, N constitute the membrane sector of the complex. The cofactor is [4Fe-4S] cluster.

It localises to the cell inner membrane. It carries out the reaction a quinone + NADH + 5 H(+)(in) = a quinol + NAD(+) + 4 H(+)(out). Its function is as follows. NDH-1 shuttles electrons from NADH, via FMN and iron-sulfur (Fe-S) centers, to quinones in the respiratory chain. The immediate electron acceptor for the enzyme in this species is believed to be ubiquinone. Couples the redox reaction to proton translocation (for every two electrons transferred, four hydrogen ions are translocated across the cytoplasmic membrane), and thus conserves the redox energy in a proton gradient. The chain is NADH-quinone oxidoreductase subunit I from Sulfurimonas denitrificans (strain ATCC 33889 / DSM 1251) (Thiomicrospira denitrificans (strain ATCC 33889 / DSM 1251)).